We begin with the raw amino-acid sequence, 433 residues long: Probable M18 family aminopeptidase 2 (433 aa).

Zn(2+)-binding residues include His79, His153, and His404.

Belongs to the peptidase M18 family. Zn(2+) serves as cofactor.

This is Probable M18 family aminopeptidase 2 (apeB) from Mycobacterium bovis (strain ATCC BAA-935 / AF2122/97).